The following is a 151-amino-acid chain: Peptide deformylase (151 aa).

Fe cation contacts are provided by cysteine 88 and histidine 130. The active site involves glutamate 131. Fe cation is bound at residue histidine 134.

This sequence belongs to the polypeptide deformylase family. The cofactor is Fe(2+).

It catalyses the reaction N-terminal N-formyl-L-methionyl-[peptide] + H2O = N-terminal L-methionyl-[peptide] + formate. Its function is as follows. Removes the formyl group from the N-terminal Met of newly synthesized proteins. Requires at least a dipeptide for an efficient rate of reaction. N-terminal L-methionine is a prerequisite for activity but the enzyme has broad specificity at other positions. The protein is Peptide deformylase of Heliobacterium modesticaldum (strain ATCC 51547 / Ice1).